The primary structure comprises 1109 residues: Coiled-coil domain-containing protein 158 (1109 aa).

Residues 1 to 12 show a composition bias toward basic and acidic residues; that stretch reads MESKACESKNED. The disordered stretch occupies residues 1-31; the sequence is MESKACESKNEDLLPSGITSKGGSSSPFFVT. Positions 17 to 31 are enriched in polar residues; sequence GITSKGGSSSPFFVT. Coiled-coil stretches lie at residues 71–166 and 242–828; these read GKEH…MLKD and VEDQ…QEQE. 2 disordered regions span residues 843–897 and 952–1061; these read LQGP…DPTR and HRSN…TGKT. Polar residues-rich tracts occupy residues 862-882, 953-970, and 988-998; these read ASVTRSHSNIPSSQSTTSFLS, RSNNSLRESTEGSKSSET, and SCFTFTSTASP. The segment covering 999 to 1019 has biased composition (low complexity); sequence SGKMSASRSFSSSPKKSPVHS. 2 stretches are compositionally biased toward polar residues: residues 1020–1037 and 1043–1061; these read LLTSSAEESVNSTPQYRS and SPTSAKDSQSPSLETTGKT. Positions 1053–1109 form a coiled coil; sequence PSLETTGKTCQKLQNRLESLQTLVEDLQLKNQAMSSMIRNQEKRIQKVKDQEKMLLK.

The polypeptide is Coiled-coil domain-containing protein 158 (Ccdc158) (Mus musculus (Mouse)).